A 345-amino-acid chain; its full sequence is S-adenosylmethionine:tRNA ribosyltransferase-isomerase (345 aa).

This sequence belongs to the QueA family. As to quaternary structure, monomer.

The protein resides in the cytoplasm. The catalysed reaction is 7-aminomethyl-7-carbaguanosine(34) in tRNA + S-adenosyl-L-methionine = epoxyqueuosine(34) in tRNA + adenine + L-methionine + 2 H(+). Its pathway is tRNA modification; tRNA-queuosine biosynthesis. Its function is as follows. Transfers and isomerizes the ribose moiety from AdoMet to the 7-aminomethyl group of 7-deazaguanine (preQ1-tRNA) to give epoxyqueuosine (oQ-tRNA). The chain is S-adenosylmethionine:tRNA ribosyltransferase-isomerase from Shewanella halifaxensis (strain HAW-EB4).